The sequence spans 300 residues: Regulatory protein NocR (300 aa).

One can recognise an HTH lysR-type domain in the interval 1–59 (MIQSRQLEAFRPVMLTGGMTSAANLVRITQPAISRLIRDLEEEIGISLFERTGNRLRPT). Positions 19-38 (MTSAANLVRITQPAISRLIR) form a DNA-binding region, H-T-H motif.

This sequence belongs to the LysR transcriptional regulatory family.

In terms of biological role, positive regulatory protein for the noc operon involved in nopaline catabolism and uptake. The chain is Regulatory protein NocR (nocR) from Agrobacterium tumefaciens (strain T37).